Reading from the N-terminus, the 270-residue chain is MEGPLTIPVLDKGFVRLVDQMGDDRAIVQAARVSYGEGTKTVREDAALIDYLMRHRHTSPFEMVVFKFHVKAPIFVARQWFRHRTASVNEISGRYSILKEEFYEPEAFRKQAKRNKQASEGALLDEEALALLRKVEQEAYGAYRALLEKGVAREMARMVLPLNLYTEFYWKQDLHNLFHFLKLRLAPEAQWEIRQYARAIAEIVKERVPLAWAAFEEHLLEGAFLSRTELRALRGLLTPEVYEKALSSLGLGGSRLKEALEKVFGPGEAL.

The ThyX domain maps to 13 to 218 (GFVRLVDQMG…PLAWAAFEEH (206 aa)). Residues serine 59, 82 to 84 (RHR), and glutamate 90 each bind FAD. DUMP is bound by residues 79 to 82 (QWFR), 90 to 94 (EISGR), and arginine 157. The ThyX motif signature appears at 82-92 (RHRTASVNEIS). Residues 173 to 175 (DLH) and histidine 179 each bind FAD. Residue arginine 184 participates in dUMP binding. Arginine 184 (involved in ionization of N3 of dUMP, leading to its activation) is an active-site residue.

Belongs to the thymidylate synthase ThyX family. As to quaternary structure, homotetramer. FAD serves as cofactor.

It catalyses the reaction dUMP + (6R)-5,10-methylene-5,6,7,8-tetrahydrofolate + NADPH + H(+) = dTMP + (6S)-5,6,7,8-tetrahydrofolate + NADP(+). It functions in the pathway pyrimidine metabolism; dTTP biosynthesis. Its function is as follows. Catalyzes the reductive methylation of 2'-deoxyuridine-5'-monophosphate (dUMP) to 2'-deoxythymidine-5'-monophosphate (dTMP) while utilizing 5,10-methylenetetrahydrofolate (mTHF) as the methyl donor, and NADPH and FADH(2) as the reductant. The polypeptide is Flavin-dependent thymidylate synthase (Thermus thermophilus (strain ATCC BAA-163 / DSM 7039 / HB27)).